Consider the following 337-residue polypeptide: DNA-directed RNA polymerase subunit alpha (337 aa).

An alpha N-terminal domain (alpha-NTD) region spans residues 1-233 (MIREKVTVST…DLFIPFLHME (233 aa)). An alpha C-terminal domain (alpha-CTD) region spans residues 266–337 (KLALKSIFID…FAIDLPKNQF (72 aa)).

Belongs to the RNA polymerase alpha chain family. In plastids the minimal PEP RNA polymerase catalytic core is composed of four subunits: alpha, beta, beta', and beta''. When a (nuclear-encoded) sigma factor is associated with the core the holoenzyme is formed, which can initiate transcription.

The protein resides in the plastid. It localises to the chloroplast. It catalyses the reaction RNA(n) + a ribonucleoside 5'-triphosphate = RNA(n+1) + diphosphate. In terms of biological role, DNA-dependent RNA polymerase catalyzes the transcription of DNA into RNA using the four ribonucleoside triphosphates as substrates. The chain is DNA-directed RNA polymerase subunit alpha from Ipomoea purpurea (Common morning glory).